The chain runs to 718 residues: D-(-)-3-hydroxybutyrate oligomer hydrolase (718 aa).

Ser-320 (charge relay system) is an active-site residue.

Belongs to the D-(-)-3-hydroxybutyrate oligomer hydrolase family.

The protein resides in the cytoplasm. It catalyses the reaction (3R)-hydroxybutanoate dimer + H2O = 2 (R)-3-hydroxybutanoate + H(+). Its pathway is lipid metabolism; butanoate metabolism. Its activity is regulated as follows. Inhibited by diisopropylfluorophosphate (DFP). Functionally, participates in the degradation of poly-3-hydroxybutyrate (PHB). It works downstream of poly(3-hydroxybutyrate) depolymerase, hydrolyzing D(-)-3-hydroxybutyrate oligomers of various length (3HB-oligomers) into 3HB-monomers. Seems to have also poly(3-hydroxybutyrate) depolymerase activity since it is able to release 3HB-monomers from artificial amorphous PHB. This Cupriavidus necator (strain ATCC 17699 / DSM 428 / KCTC 22496 / NCIMB 10442 / H16 / Stanier 337) (Ralstonia eutropha) protein is D-(-)-3-hydroxybutyrate oligomer hydrolase (phaZ2).